The following is a 151-amino-acid chain: D-aminoacyl-tRNA deacylase (151 aa).

The Gly-cisPro motif, important for rejection of L-amino acids signature appears at 142-143; sequence GP.

The protein belongs to the DTD family. As to quaternary structure, homodimer.

Its subcellular location is the cytoplasm. The catalysed reaction is glycyl-tRNA(Ala) + H2O = tRNA(Ala) + glycine + H(+). The enzyme catalyses a D-aminoacyl-tRNA + H2O = a tRNA + a D-alpha-amino acid + H(+). In terms of biological role, an aminoacyl-tRNA editing enzyme that deacylates mischarged D-aminoacyl-tRNAs. Also deacylates mischarged glycyl-tRNA(Ala), protecting cells against glycine mischarging by AlaRS. Acts via tRNA-based rather than protein-based catalysis; rejects L-amino acids rather than detecting D-amino acids in the active site. By recycling D-aminoacyl-tRNA to D-amino acids and free tRNA molecules, this enzyme counteracts the toxicity associated with the formation of D-aminoacyl-tRNA entities in vivo and helps enforce protein L-homochirality. This chain is D-aminoacyl-tRNA deacylase, found in Psychrobacter arcticus (strain DSM 17307 / VKM B-2377 / 273-4).